The chain runs to 557 residues: Neurofilament light polypeptide (557 aa).

N-acetylserine is present on serine 2. Residues 2–89 (SSYSYDPYYT…KIVRTQEKAQ (88 aa)) are head. Residues 86 to 396 (EKAQLQDLND…KLLEGEETRL (311 aa)) form the IF rod domain. Residues 90–121 (LQDLNDRFANFIERVHELEQRNKVLEAELLLL) are coil 1A. The interval 122–134 (RQKHNEPSRLRDL) is linker 1. Residues 135–230 (YEQEVRELRL…KVHEEELAQL (96 aa)) are coil 1B. The tract at residues 231 to 248 (QSQVQYAQISLEVEVAKP) is linker 12. The segment at 249–267 (DLSSALRDIRAQYEKLAAK) is coil 2A. Positions 268 to 276 (NMQSAEDWF) are linker 2. Residues 277-392 (KSRFTVLTQS…AAYRKLLEGE (116 aa)) are coil 2B. The interval 393–437 (ETRLSFSGVGAITSGYTQSAPVFGRSAYSLQSSSYMTSRAFPTYY) is tail, subdomain A. The tail stretch occupies residues 393-557 (ETRLSFSGVG…KKKKKKKKKK (165 aa)). The tract at residues 438–557 (SSHVQEEQLD…KKKKKKKKKK (120 aa)) is tail, subdomain B (acidic). Positions 452-557 (IESSRAEEAK…KKKKKKKKKK (106 aa)) are disordered. Basic and acidic residues predominate over residues 453-464 (ESSRAEEAKAEA). The segment covering 465–538 (PEEEEEEAGE…GEGEEEEEGK (74 aa)) has biased composition (acidic residues). The segment covering 539-548 (GEEPAEEESK) has biased composition (basic and acidic residues).

This sequence belongs to the intermediate filament family. In terms of assembly, forms homodimers (in vitro).

The protein localises to the cell projection. Its subcellular location is the axon. It is found in the cytoplasm. The protein resides in the cytoskeleton. In terms of biological role, neurofilaments usually contain three intermediate filament proteins: NEFL, NEFM, and NEFH which are involved in the maintenance of neuronal caliber. May additionally cooperate with other neuronal intermediate filament proteins to form neuronal filamentous networks. The protein is Neurofilament light polypeptide (nefl) of Xenopus tropicalis (Western clawed frog).